Here is a 223-residue protein sequence, read N- to C-terminus: MIF4G domain-containing protein B (223 aa).

Residues 9–206 enclose the MIF4G domain; sequence DYKIQGFDAD…LEMIEYRAAG (198 aa).

This sequence belongs to the MIF4GD family. In terms of assembly, interacts with eif4g1, eif4g2 and slbp; probably tethered by SLBP to the 3'-end of mRNAs ending with the histone stem-loop, it also interacts with eif4g1 which is bound to their 5'-end.

It is found in the cytoplasm. The protein resides in the nucleus. Its function is as follows. Functions in replication-dependent translation of histone mRNAs which differ from other eukaryotic mRNAs in that they do not end with a poly-A tail but a stem-loop. May participate in circularizing those mRNAs specifically enhancing their translation. The protein is MIF4G domain-containing protein B (mif4gd-b) of Xenopus laevis (African clawed frog).